Reading from the N-terminus, the 163-residue chain is Shikimate kinase (163 aa).

10–15 lines the ATP pocket; it reads GVGKTT. Thr14 contacts Mg(2+). The substrate site is built by Asp28, Arg52, and Gly75. Position 116 (Arg116) interacts with ATP. Arg134 contributes to the substrate binding site.

Belongs to the shikimate kinase family. Monomer. Mg(2+) serves as cofactor.

It is found in the cytoplasm. The catalysed reaction is shikimate + ATP = 3-phosphoshikimate + ADP + H(+). Its pathway is metabolic intermediate biosynthesis; chorismate biosynthesis; chorismate from D-erythrose 4-phosphate and phosphoenolpyruvate: step 5/7. Its function is as follows. Catalyzes the specific phosphorylation of the 3-hydroxyl group of shikimic acid using ATP as a cosubstrate. The protein is Shikimate kinase of Streptococcus suis (strain 98HAH33).